We begin with the raw amino-acid sequence, 291 residues long: 3-hydroxy-5-phosphonooxypentane-2,4-dione thiolase (291 aa).

The Schiff-base intermediate with substrate role is filled by Lys203.

Belongs to the DeoC/FbaB aldolase family. As to quaternary structure, homodecamer.

It localises to the cytoplasm. It carries out the reaction dihydroxyacetone phosphate + acetyl-CoA = 3-hydroxy-2,4-dioxopentyl phosphate + CoA. Its function is as follows. Involved in the degradation of phospho-AI-2, thereby terminating induction of the lsr operon and closing the AI-2 signaling cycle. Catalyzes the transfer of an acetyl moiety from 3-hydroxy-5-phosphonooxypentane-2,4-dione to CoA to form glycerone phosphate and acetyl-CoA. In Salmonella paratyphi A (strain ATCC 9150 / SARB42), this protein is 3-hydroxy-5-phosphonooxypentane-2,4-dione thiolase.